We begin with the raw amino-acid sequence, 691 residues long: Ubiquitin-like domain-containing protein CIP73 (691 aa).

The Ubiquitin-like domain occupies 22–97; sequence IEIKIKMLDS…LHLVARHPDL (76 aa). Disordered regions lie at residues 92–118, 176–203, 264–283, 432–473, 499–554, 590–624, and 645–691; these read ARHP…TGHG, TGLG…ISSD, RNEE…EGLS, ASTT…ASIA, SVNT…SSRV, EIHV…EPNV, and HIGR…QKME. Polar residues-rich tracts occupy residues 104–118, 178–189, 273–283, 446–465, and 499–523; these read PNHS…TGHG, LGRTSDFTGNPS, SRLSSTPEGLS, TQSA…QTTS, and SVNT…STAE. The span at 525 to 535 shows a compositional bias: basic and acidic residues; that stretch reads TLHRQSMEDSA. Over residues 536–554 the composition is skewed to polar residues; sequence RNGTLPTPNTQQEPSSSRV. The segment covering 597-617 has biased composition (low complexity); it reads SSQGTTAGVTSAATSSGAAQA.

Interacts with CCAMK. In terms of processing, phosphorylated at the N-terminus by CCAMK. In terms of tissue distribution, highly epressed in roots. Expressed at very low levels in leaves and stems.

The protein resides in the nucleus. In terms of biological role, involved in root nodulation. Required for root nodule organogenesis after infection by symbiotic rhizobia. Probably not involved in arbuscular mycorrhizal (AM) symbiosis. Acts downstream of CCAMK. The chain is Ubiquitin-like domain-containing protein CIP73 from Lotus japonicus (Lotus corniculatus var. japonicus).